We begin with the raw amino-acid sequence, 402 residues long: Enoyl-[acyl-carrier-protein] reductase [NADH] (402 aa).

NAD(+)-binding positions include 48 to 53, 74 to 75, 111 to 112, and 140 to 141; these read GASSGY, FE, DA, and LA. Tyr226 is a binding site for substrate. The Proton donor role is filled by Tyr236. Residues Lys245 and 274–276 contribute to the NAD(+) site; that span reads VVT.

The protein belongs to the TER reductase family. As to quaternary structure, monomer.

The catalysed reaction is a 2,3-saturated acyl-[ACP] + NAD(+) = a (2E)-enoyl-[ACP] + NADH + H(+). It carries out the reaction a 2,3-saturated acyl-CoA + NAD(+) = a (2E)-enoyl-CoA + NADH + H(+). It functions in the pathway lipid metabolism; fatty acid biosynthesis. Functionally, involved in the final reduction of the elongation cycle of fatty acid synthesis (FAS II). Catalyzes the reduction of a carbon-carbon double bond in an enoyl moiety that is covalently linked to an acyl carrier protein (ACP). It can also use crotonyl-CoA. This chain is Enoyl-[acyl-carrier-protein] reductase [NADH], found in Xanthomonas oryzae pv. oryzae (strain MAFF 311018).